The following is a 545-amino-acid chain: Glucose-6-phosphate isomerase (545 aa).

Glu351 functions as the Proton donor in the catalytic mechanism. Active-site residues include His382 and Lys510.

It belongs to the GPI family.

The protein localises to the cytoplasm. The catalysed reaction is alpha-D-glucose 6-phosphate = beta-D-fructose 6-phosphate. It functions in the pathway carbohydrate biosynthesis; gluconeogenesis. It participates in carbohydrate degradation; glycolysis; D-glyceraldehyde 3-phosphate and glycerone phosphate from D-glucose: step 2/4. Catalyzes the reversible isomerization of glucose-6-phosphate to fructose-6-phosphate. This is Glucose-6-phosphate isomerase from Shewanella baltica (strain OS185).